Here is a 277-residue protein sequence, read N- to C-terminus: Large ribosomal subunit protein uL2 (277 aa).

2 disordered regions span residues 37–60 and 223–264; these read KNST…GHKH and VVMN…NKRT. Polar residues predominate over residues 39-49; the sequence is STAGRNNNGHI. Positions 50–60 are enriched in basic residues; sequence TTRHKGGGHKH. Over residues 229-244 the composition is skewed to basic and acidic residues; the sequence is DHPHGGGEGRTGEARE.

The protein belongs to the universal ribosomal protein uL2 family. In terms of assembly, part of the 50S ribosomal subunit. Forms a bridge to the 30S subunit in the 70S ribosome.

In terms of biological role, one of the primary rRNA binding proteins. Required for association of the 30S and 50S subunits to form the 70S ribosome, for tRNA binding and peptide bond formation. It has been suggested to have peptidyltransferase activity; this is somewhat controversial. Makes several contacts with the 16S rRNA in the 70S ribosome. The sequence is that of Large ribosomal subunit protein uL2 from Neisseria meningitidis serogroup B (strain ATCC BAA-335 / MC58).